The sequence spans 154 residues: Toxin YhaV (154 aa).

Homohexamer; forms a complex with PrlF (SohA) with stoichiometry PrlF(2)-YhaV(4), possibly as a YhaV(2)-PrlF(2)-YhaV(2) complex like the MazFE complex. May dimerize in solution.

Functionally, toxic component of a type II toxin-antitoxin (TA) system. Has RNase activity in vitro. Acts as a transcription factor. The YhaV/PrlF complex binds the prlF-yhaV operon, probably negatively regulating its expression. The chain is Toxin YhaV (yhaV) from Escherichia coli O157:H7.